The primary structure comprises 184 residues: Lactoylglutathione lyase (184 aa).

At A2 the chain carries N-acetylalanine. Cysteines 19 and 20 form a disulfide. A VOC domain is found at 31–177 (LLQQTMLRIK…DGYWIEILNP (147 aa)). Substrate is bound by residues Q34 and R38. Q34 serves as a coordination point for Zn(2+). E100 lines the Zn(2+) pocket. N104 is a substrate binding site. T107 is subject to Phosphothreonine. 2 residues coordinate substrate: R123 and H127. H127 provides a ligand contact to Zn(2+). Residue C139 is modified to S-glutathionyl cysteine. An N6-acetyllysine; alternate modification is found at K148. K148 is modified (N6-succinyllysine; alternate). Residue 157–158 (KM) coordinates substrate. E173 is a Zn(2+) binding site. E173 acts as the Proton donor/acceptor in catalysis.

The protein belongs to the glyoxalase I family. Homodimer. It depends on Zn(2+) as a cofactor. In terms of processing, glutathionylation at Cys-139 inhibits enzyme activity. Phosphorylated at Thr-107 in the presence of CaMK2. However, this is a consensus site for phosphorylation by CK2 so phosphorylation may be mediated by CK2 rather than CaMK2. Phosphorylation is induced by TNF and suppresses the TNF-induced transcriptional activity of NF-kappa-B. Post-translationally, exists in a nitric oxide (NO)-modified form. The exact nature of the modification is unknown, but it suppresses the TNF-induced transcriptional activity of NF-kappa-B.

It carries out the reaction (R)-S-lactoylglutathione = methylglyoxal + glutathione. It participates in secondary metabolite metabolism; methylglyoxal degradation; (R)-lactate from methylglyoxal: step 1/2. Its function is as follows. Catalyzes the conversion of hemimercaptal, formed from methylglyoxal and glutathione, to S-lactoylglutathione. Involved in the regulation of TNF-induced transcriptional activity of NF-kappa-B. Required for normal osteoclastogenesis. In Rattus norvegicus (Rat), this protein is Lactoylglutathione lyase (Glo1).